Reading from the N-terminus, the 511-residue chain is 2,3-bisphosphoglycerate-independent phosphoglycerate mutase (511 aa).

D12 provides a ligand contact to Mn(2+). Y36 is modified (phosphotyrosine). S62 is a Mn(2+) binding site. The Phosphoserine intermediate role is filled by S62. Residues H123, 153–154 (RD), R185, R191, 261–264 (RPDR), and K336 each bind substrate. 5 residues coordinate Mn(2+): D403, H407, D444, H445, and H462.

It belongs to the BPG-independent phosphoglycerate mutase family. Monomer. Mn(2+) is required as a cofactor.

It carries out the reaction (2R)-2-phosphoglycerate = (2R)-3-phosphoglycerate. The protein operates within carbohydrate degradation; glycolysis; pyruvate from D-glyceraldehyde 3-phosphate: step 3/5. Catalyzes the interconversion of 2-phosphoglycerate and 3-phosphoglycerate. The polypeptide is 2,3-bisphosphoglycerate-independent phosphoglycerate mutase (Geobacillus kaustophilus (strain HTA426)).